Consider the following 471-residue polypeptide: Methylenetetrahydrofolate--tRNA-(uracil-5-)-methyltransferase TrmFO (471 aa).

Residue 9-14 participates in FAD binding; the sequence is GGGLSG.

It belongs to the MnmG family. TrmFO subfamily. Requires FAD as cofactor.

The protein localises to the cytoplasm. It carries out the reaction uridine(54) in tRNA + (6R)-5,10-methylene-5,6,7,8-tetrahydrofolate + NADH + H(+) = 5-methyluridine(54) in tRNA + (6S)-5,6,7,8-tetrahydrofolate + NAD(+). The catalysed reaction is uridine(54) in tRNA + (6R)-5,10-methylene-5,6,7,8-tetrahydrofolate + NADPH + H(+) = 5-methyluridine(54) in tRNA + (6S)-5,6,7,8-tetrahydrofolate + NADP(+). Catalyzes the folate-dependent formation of 5-methyl-uridine at position 54 (M-5-U54) in all tRNAs. This Beijerinckia indica subsp. indica (strain ATCC 9039 / DSM 1715 / NCIMB 8712) protein is Methylenetetrahydrofolate--tRNA-(uracil-5-)-methyltransferase TrmFO.